Consider the following 245-residue polypeptide: Bis(5'-nucleosyl)-tetraphosphatase PrpE [asymmetrical] (245 aa).

Belongs to the PrpE family. The cofactor is Ni(2+).

It carries out the reaction P(1),P(4)-bis(5'-guanosyl) tetraphosphate + H2O = GMP + GTP + 2 H(+). In terms of biological role, asymmetrically hydrolyzes Ap4p to yield AMP and ATP. The polypeptide is Bis(5'-nucleosyl)-tetraphosphatase PrpE [asymmetrical] (Geobacillus sp. (strain WCH70)).